The chain runs to 762 residues: Putative cation exchanger YDL206W (762 aa).

An N-terminal signal peptide occupies residues Met-1–Ser-26. The Extracellular portion of the chain corresponds to Ser-27–Ser-30. The N-linked (GlcNAc...) asparagine glycan is linked to Asn-28. Residues Ile-31 to Val-51 form a helical membrane-spanning segment. At Thr-52 to Ser-102 the chain is on the cytoplasmic side. The helical transmembrane segment at Leu-103–Met-123 threads the bilayer. Over Gly-124–Tyr-156 the chain is Extracellular. Asn-148 carries an N-linked (GlcNAc...) asparagine glycan. A helical transmembrane segment spans residues Ile-157–Gly-177. A topological domain (cytoplasmic) is located at residue Arg-178. The chain crosses the membrane as a helical span at residues Leu-179–Ile-199. Residues Lys-200 to Glu-501 lie on the Extracellular side of the membrane. N-linked (GlcNAc...) asparagine glycosylation is found at Asn-280 and Asn-329. A helical transmembrane segment spans residues Ile-502 to Leu-522. Topologically, residues Ser-523 to Gln-554 are cytoplasmic. Residues Leu-555–Leu-575 traverse the membrane as a helical segment. Residues Tyr-576 to Asp-589 lie on the Extracellular side of the membrane. Residues Ile-590–Ile-610 form a helical membrane-spanning segment. Residues Val-611–Thr-615 lie on the Cytoplasmic side of the membrane. Residues His-616–Gly-636 form a helical membrane-spanning segment. The Extracellular portion of the chain corresponds to Asn-637–Lys-650. N-linked (GlcNAc...) asparagine glycosylation occurs at Asn-645. Residues Ile-651 to Phe-671 form a helical membrane-spanning segment. The Cytoplasmic segment spans residues Gly-672 to Asn-709. A helical transmembrane segment spans residues Leu-710–Leu-730. Topologically, residues Asn-731–Lys-738 are extracellular. Residues Ile-739–Val-759 form a helical membrane-spanning segment. The Cytoplasmic portion of the chain corresponds to His-760–Val-762.

The protein belongs to the Ca(2+):cation antiporter (CaCA) (TC 2.A.19) family.

The protein resides in the membrane. Its function is as follows. Putative cation exchanger. The protein is Putative cation exchanger YDL206W of Saccharomyces cerevisiae (strain ATCC 204508 / S288c) (Baker's yeast).